We begin with the raw amino-acid sequence, 234 residues long: UPF0173 metal-dependent hydrolase Msp_0516 (234 aa).

Belongs to the UPF0173 family.

In Methanosphaera stadtmanae (strain ATCC 43021 / DSM 3091 / JCM 11832 / MCB-3), this protein is UPF0173 metal-dependent hydrolase Msp_0516.